Consider the following 391-residue polypeptide: Mannose-6-phosphate isomerase (391 aa).

Zn(2+) is bound by residues glutamine 97, histidine 99, glutamate 134, and histidine 255. The active site involves arginine 274.

This sequence belongs to the mannose-6-phosphate isomerase type 1 family. Requires Zn(2+) as cofactor.

The protein resides in the cytoplasm. It catalyses the reaction D-mannose 6-phosphate = D-fructose 6-phosphate. In terms of biological role, involved in the conversion of glucose to GDP-L-fucose, which can be converted to L-fucose, a capsular polysaccharide. The protein is Mannose-6-phosphate isomerase (manA) of Salmonella typhimurium (strain LT2 / SGSC1412 / ATCC 700720).